Here is a 268-residue protein sequence, read N- to C-terminus: UPF0719 transmembrane protein aq_1349 (268 aa).

Transmembrane regions (helical) follow at residues 5–24 (LIAL…LFFR), 37–59 (NLAL…YSVY), 69–91 (LYLI…IFLR), 104–126 (AGAG…ASFW), 130–152 (SFIL…LFIS), 173–195 (FSAS…GAIS), 210–232 (VLYF…FLLF), and 245–267 (NLSA…LAVM).

The protein belongs to the UPF0719 family.

The protein resides in the cell membrane. This Aquifex aeolicus (strain VF5) protein is UPF0719 transmembrane protein aq_1349.